The chain runs to 351 residues: Dihydroorotate dehydrogenase (quinone) (351 aa).

FMN-binding positions include 65-69 (AGLDK) and Thr89. Lys69 provides a ligand contact to substrate. A substrate-binding site is contributed by 114–118 (NRLGF). FMN is bound by residues Asn150 and Asn183. Position 183 (Asn183) interacts with substrate. Ser186 (nucleophile) is an active-site residue. Position 188 (Asn188) interacts with substrate. FMN-binding residues include Lys228 and Thr256. 257-258 (NT) is a substrate binding site. FMN is bound by residues Gly279, Gly308, and 329-330 (YT).

It belongs to the dihydroorotate dehydrogenase family. Type 2 subfamily. As to quaternary structure, monomer. FMN serves as cofactor.

Its subcellular location is the cell membrane. The catalysed reaction is (S)-dihydroorotate + a quinone = orotate + a quinol. The protein operates within pyrimidine metabolism; UMP biosynthesis via de novo pathway; orotate from (S)-dihydroorotate (quinone route): step 1/1. Its function is as follows. Catalyzes the conversion of dihydroorotate to orotate with quinone as electron acceptor. The sequence is that of Dihydroorotate dehydrogenase (quinone) from Acidovorax sp. (strain JS42).